The chain runs to 306 residues: Methylated RNA-binding protein 1 (306 aa).

Positions 155–290 (SRFFVIKSSS…SIGISIINLF (136 aa)) constitute a YTH domain. Residues 161-163 (KSS), N207, and W231 each bind RNA.

Functionally, RNA-binding protein that acts as a post-transcriptional regulator of phosphate metabolism by binding to the 3'-UTR region of PHO4 mRNA, decreasing its stability. Acts by recognizing and binding N6-methyladenosine (m6A)-containing RNAs, a modification present at internal sites of mRNAs and some non-coding RNAs. This chain is Methylated RNA-binding protein 1, found in Saccharomyces cerevisiae (strain ATCC 204508 / S288c) (Baker's yeast).